The following is a 358-amino-acid chain: Photosystem II protein D1 2 (358 aa).

3 helical membrane-spanning segments follow: residues 28-45 (YVGW…AATI), 117-132 (HFLI…QWEL), and 141-155 (WICV…AAMA). His117 lines the chlorophyll a pocket. Position 125 (Tyr125) interacts with pheophytin a. 2 residues coordinate [CaMn4O5] cluster: Asp169 and Glu188. A helical transmembrane segment spans residues 196–217 (FHMLGVAGVFGGSLFSAMHGSL). His197 lines the chlorophyll a pocket. A quinone contacts are provided by residues His214 and 263-264 (SF). Fe cation is bound at residue His214. His271 lines the Fe cation pocket. Residues 273–287 (FLGAWPVVGIWFTSM) form a helical membrane-spanning segment. 4 residues coordinate [CaMn4O5] cluster: His331, Glu332, Asp341, and Ala343. The propeptide occupies 344 to 358 (TVESTPVALQAPAIG).

Belongs to the reaction center PufL/M/PsbA/D family. As to quaternary structure, PSII is composed of 1 copy each of membrane proteins PsbA, PsbB, PsbC, PsbD, PsbE, PsbF, PsbH, PsbI, PsbJ, PsbK, PsbL, PsbM, PsbT, PsbX, PsbY, PsbZ, Psb30/Ycf12, peripheral proteins PsbO, CyanoQ (PsbQ), PsbU, PsbV and a large number of cofactors. It forms dimeric complexes. Requires The D1/D2 heterodimer binds P680, chlorophylls that are the primary electron donor of PSII, and subsequent electron acceptors. It shares a non-heme iron and each subunit binds pheophytin, quinone, additional chlorophylls, carotenoids and lipids. D1 provides most of the ligands for the Mn4-Ca-O5 cluster of the oxygen-evolving complex (OEC). There is also a Cl(-1) ion associated with D1 and D2, which is required for oxygen evolution. The PSII complex binds additional chlorophylls, carotenoids and specific lipids. as cofactor. Post-translationally, tyr-160 forms a radical intermediate that is referred to as redox-active TyrZ, YZ or Y-Z. C-terminally processed by CtpA; processing is essential to allow assembly of the oxygen-evolving complex and thus photosynthetic growth.

It is found in the cellular thylakoid membrane. The enzyme catalyses 2 a plastoquinone + 4 hnu + 2 H2O = 2 a plastoquinol + O2. Functionally, photosystem II (PSII) is a light-driven water:plastoquinone oxidoreductase that uses light energy to abstract electrons from H(2)O, generating O(2) and a proton gradient subsequently used for ATP formation. It consists of a core antenna complex that captures photons, and an electron transfer chain that converts photonic excitation into a charge separation. The D1/D2 (PsbA/PsbD) reaction center heterodimer binds P680, the primary electron donor of PSII as well as several subsequent electron acceptors. The polypeptide is Photosystem II protein D1 2 (Parasynechococcus marenigrum (strain WH8102)).